A 219-amino-acid polypeptide reads, in one-letter code: 2-hydroxy-3-keto-5-methylthiopentenyl-1-phosphate phosphatase (219 aa).

Belongs to the HAD-like hydrolase superfamily. MtnX family.

The catalysed reaction is 2-hydroxy-5-methylsulfanyl-3-oxopent-1-enyl phosphate + H2O = 1,2-dihydroxy-5-(methylsulfanyl)pent-1-en-3-one + phosphate. Its pathway is amino-acid biosynthesis; L-methionine biosynthesis via salvage pathway; L-methionine from S-methyl-5-thio-alpha-D-ribose 1-phosphate: step 4/6. Functionally, dephosphorylates 2-hydroxy-3-keto-5-methylthiopentenyl-1-phosphate (HK-MTPenyl-1-P) yielding 1,2-dihydroxy-3-keto-5-methylthiopentene (DHK-MTPene). In Bacillus cytotoxicus (strain DSM 22905 / CIP 110041 / 391-98 / NVH 391-98), this protein is 2-hydroxy-3-keto-5-methylthiopentenyl-1-phosphate phosphatase.